A 359-amino-acid chain; its full sequence is tRNA-specific 2-thiouridylase MnmA (359 aa).

Residues 7-14 (AMSGGVDS) and Met-33 each bind ATP. Cys-101 (nucleophile) is an active-site residue. Cys-101 and Cys-198 are joined by a disulfide. Gly-125 serves as a coordination point for ATP. The segment at 148-150 (KDQ) is interaction with tRNA. Cys-198 functions as the Cysteine persulfide intermediate in the catalytic mechanism.

This sequence belongs to the MnmA/TRMU family.

It localises to the cytoplasm. The catalysed reaction is S-sulfanyl-L-cysteinyl-[protein] + uridine(34) in tRNA + AH2 + ATP = 2-thiouridine(34) in tRNA + L-cysteinyl-[protein] + A + AMP + diphosphate + H(+). Its function is as follows. Catalyzes the 2-thiolation of uridine at the wobble position (U34) of tRNA, leading to the formation of s(2)U34. The chain is tRNA-specific 2-thiouridylase MnmA from Chloroflexus aurantiacus (strain ATCC 29366 / DSM 635 / J-10-fl).